The chain runs to 924 residues: MQIPKYENKPFKPPRRVGSNKYTQLKPTATAVTTAPISKAKVTANLKRSISAGPTLNLAKKPNNLTSNENTRYFTIMYRKPTTKKHKTWSGDGYATLKANSDKLCFYNEAGKFLGSSMLPSDSDSLFETLFKAGSNEVQLDYELKENAEIRSAKEALSQNMGNPSPPTTSTTETVPSTKNDGGKYQMPLSQLFSLNTVKRFKSVTKQTNEHMTTVPKTSQNSKAKKYYPVFDVNKIDNPIVMNKNAAAEVDVIVDPLLGKFLRPHQREGVKFMYDCLMGLARPTIENPDIDCTTKSLVLENDSDISGCLLADDMGLGKTLMSITLIWTLIRQTPFASKVSCSQSGIPLTGLCKKILVVCPVTLIGNWKREFGKWLNLSRIGVLTLSSRNSPDMDKMAVRNFLKVQRTYQVLIIGYEKLLSVSEELEKNKHLIDMLVCDEGHRLKNGASKILNTLKSLDIRRKLLLTGTPIQNDLNEFFTIIDFINPGILGSFASFKRRFIIPITRARDTANRYNEELLKKGEERSKEMIEITKRFILRRTNAILEKYLPPKTDIILFCKPYSQQILAFKDILQGARLDFGQLTFSSSLGLITLLKKVCNSPGLVGSDPYYKSHIKDTQSQDSYSRSLNSGKLKVLMTLLEGIRKGTKEKVVVVSNYTQTLDIIENLMNMAGMSHCRLDGSIPAKQRDSIVTSFNRNPAIFGFLLSAKSGGVGLNLVGASRLILFDNDWNPSVDLQAMSRIHRDGQKKPCFIYRLVTTGCIDEKILQRQLMKNSLSQKFLGDSEMRNKESSNDDLFNKEDLKDLFSVHTDTKSNTHDLICSCDGLGEEIEYPETNQQQNTVELRKRSTTTWTSALDLQKKMNEAATNDDAKKSQYIRQCLVHYKHIDPARQDELFDEVITDSFTELKDSITFAFVKPGEICLREQ.

Residues 1 to 10 show a composition bias toward basic and acidic residues; it reads MQIPKYENKP. Disordered stretches follow at residues 1-21 and 155-183; these read MQIP…GSNK and EALS…NDGG. A compositionally biased stretch (low complexity) spans 168–178; that stretch reads TTSTTETVPST. Positions 299 to 487 constitute a Helicase ATP-binding domain; sequence LENDSDISGC…FTIIDFINPG (189 aa). 346-353 serves as a coordination point for ATP; that stretch reads IPLTGLCK. Positions 472–475 match the DEGH box motif; the sequence is NDLN. K615 is covalently cross-linked (Glycyl lysine isopeptide (Lys-Gly) (interchain with G-Cter in ubiquitin)). The 160-residue stretch at 631 to 790 folds into the Helicase C-terminal domain; sequence KLKVLMTLLE…DSEMRNKESS (160 aa).

The protein belongs to the SNF2/RAD54 helicase family. Interacts with RAD51 and DMC1.

Its subcellular location is the nucleus. The enzyme catalyses ATP + H2O = ADP + phosphate + H(+). Functionally, involved in the recombinational repair of double-strand breaks (DSB) in DNA during mitosis and meiosis. Has DNA dependent ATPase activity. Promotes D-loop (displacement loop) formation with RAD51 recombinase. Modifies the topology of double-stranded DNA during the D-loop reaction to facilitate the invasion of the homologous duplex molecule by the initiating single-stranded DNA substrate. Required for adaptation from G2/M checkpoint arrest induced by a double strand break, by participating in monitoring the extent of single-stranded DNA produced by resection of DNA ends. This role is distinct from its roles in recombination. Promotes colocalization of RAD51 and DMC1 during meiotic recombination. Involved in crossover interference. The protein is DNA repair and recombination protein RDH54 (RDH54) of Saccharomyces cerevisiae (strain JAY291) (Baker's yeast).